The sequence spans 233 residues: 2,3,4,5-tetrahydropyridine-2,6-dicarboxylate N-acetyltransferase (233 aa).

Belongs to the transferase hexapeptide repeat family. DapH subfamily.

It catalyses the reaction (S)-2,3,4,5-tetrahydrodipicolinate + acetyl-CoA + H2O = L-2-acetamido-6-oxoheptanedioate + CoA. It participates in amino-acid biosynthesis; L-lysine biosynthesis via DAP pathway; LL-2,6-diaminopimelate from (S)-tetrahydrodipicolinate (acetylase route): step 1/3. Its function is as follows. Catalyzes the transfer of an acetyl group from acetyl-CoA to tetrahydrodipicolinate. The protein is 2,3,4,5-tetrahydropyridine-2,6-dicarboxylate N-acetyltransferase of Enterococcus faecalis (strain ATCC 700802 / V583).